We begin with the raw amino-acid sequence, 295 residues long: Phosphatidylserine decarboxylase proenzyme (295 aa).

Residues Asp-113, His-169, and Ser-256 each act as charge relay system; for autoendoproteolytic cleavage activity in the active site. Ser-256 functions as the Schiff-base intermediate with substrate; via pyruvic acid; for decarboxylase activity in the catalytic mechanism. Ser-256 is modified (pyruvic acid (Ser); by autocatalysis).

It belongs to the phosphatidylserine decarboxylase family. PSD-B subfamily. Prokaryotic type II sub-subfamily. As to quaternary structure, heterodimer of a large membrane-associated beta subunit and a small pyruvoyl-containing alpha subunit. Pyruvate is required as a cofactor. Is synthesized initially as an inactive proenzyme. Formation of the active enzyme involves a self-maturation process in which the active site pyruvoyl group is generated from an internal serine residue via an autocatalytic post-translational modification. Two non-identical subunits are generated from the proenzyme in this reaction, and the pyruvate is formed at the N-terminus of the alpha chain, which is derived from the carboxyl end of the proenzyme. The autoendoproteolytic cleavage occurs by a canonical serine protease mechanism, in which the side chain hydroxyl group of the serine supplies its oxygen atom to form the C-terminus of the beta chain, while the remainder of the serine residue undergoes an oxidative deamination to produce ammonia and the pyruvoyl prosthetic group on the alpha chain. During this reaction, the Ser that is part of the protease active site of the proenzyme becomes the pyruvoyl prosthetic group, which constitutes an essential element of the active site of the mature decarboxylase.

Its subcellular location is the cell membrane. It carries out the reaction a 1,2-diacyl-sn-glycero-3-phospho-L-serine + H(+) = a 1,2-diacyl-sn-glycero-3-phosphoethanolamine + CO2. It participates in phospholipid metabolism; phosphatidylethanolamine biosynthesis; phosphatidylethanolamine from CDP-diacylglycerol: step 2/2. Its function is as follows. Catalyzes the formation of phosphatidylethanolamine (PtdEtn) from phosphatidylserine (PtdSer). This Clostridium botulinum (strain Kyoto / Type A2) protein is Phosphatidylserine decarboxylase proenzyme.